A 136-amino-acid chain; its full sequence is NADH-quinone oxidoreductase subunit A (136 aa).

Transmembrane regions (helical) follow at residues 20–40 (LAVYAVLVAAFVAVQLFVAWW), 70–90 (VPFYLVAIFFLIFDMEGAYIL), and 99–119 (LGWAGWLQMSFFIGLLLVGLV).

This sequence belongs to the complex I subunit 3 family. In terms of assembly, NDH-1 is composed of 14 different subunits. Subunits NuoA, H, J, K, L, M, N constitute the membrane sector of the complex.

The protein localises to the cell inner membrane. It carries out the reaction a quinone + NADH + 5 H(+)(in) = a quinol + NAD(+) + 4 H(+)(out). Its function is as follows. NDH-1 shuttles electrons from NADH, via FMN and iron-sulfur (Fe-S) centers, to quinones in the respiratory chain. The immediate electron acceptor for the enzyme in this species is believed to be ubiquinone. Couples the redox reaction to proton translocation (for every two electrons transferred, four hydrogen ions are translocated across the cytoplasmic membrane), and thus conserves the redox energy in a proton gradient. In Syntrophobacter fumaroxidans (strain DSM 10017 / MPOB), this protein is NADH-quinone oxidoreductase subunit A.